Consider the following 422-residue polypeptide: Histidine--tRNA ligase (422 aa).

The protein belongs to the class-II aminoacyl-tRNA synthetase family. In terms of assembly, homodimer.

It is found in the cytoplasm. It catalyses the reaction tRNA(His) + L-histidine + ATP = L-histidyl-tRNA(His) + AMP + diphosphate + H(+). The chain is Histidine--tRNA ligase from Mycolicibacterium vanbaalenii (strain DSM 7251 / JCM 13017 / BCRC 16820 / KCTC 9966 / NRRL B-24157 / PYR-1) (Mycobacterium vanbaalenii).